Here is a 345-residue protein sequence, read N- to C-terminus: Phosphoribosylformylglycinamidine cyclo-ligase (345 aa).

Belongs to the AIR synthase family.

It is found in the cytoplasm. It catalyses the reaction 2-formamido-N(1)-(5-O-phospho-beta-D-ribosyl)acetamidine + ATP = 5-amino-1-(5-phospho-beta-D-ribosyl)imidazole + ADP + phosphate + H(+). It functions in the pathway purine metabolism; IMP biosynthesis via de novo pathway; 5-amino-1-(5-phospho-D-ribosyl)imidazole from N(2)-formyl-N(1)-(5-phospho-D-ribosyl)glycinamide: step 2/2. The protein is Phosphoribosylformylglycinamidine cyclo-ligase of Escherichia coli O45:K1 (strain S88 / ExPEC).